A 342-amino-acid polypeptide reads, in one-letter code: Methyltransferase ungE' (342 aa).

Belongs to the methyltransferase superfamily.

Its pathway is secondary metabolite biosynthesis. Its function is as follows. Methyltransferase; part of the gene cluster that mediates the biosynthesis of the unguisins, gamma-aminobutyric acid (GABA)-containing fungal cyclic heptapeptides with the amino acid sequence cyclo-(D-Ala1-D-Val2-L-Leu3-beta-MePhe4-D-Ala5-D-Trp6-GABA7) for unguisin H and cyclo-(D-Ala1-D-Ala2-L-Leu3-beta-MePhe4-D-Ala5-D-Trp6-GABA7) for unguisin I. Within the pathway, the methyltransferase ungE' is probably involved in the synthesis of the (2R,3R)-beta-methylphenylalanine residue incorporated by the module 4 of the nonribosomal peptide synthetase (NRPS) ungA'. The alanine racemase ungC' catalyzes the interconversion of L-alanine and D-alanine, providing the D-alanine which is accepted by the first adenylation domain of ungA'. UngA' is the main enzyme within the cluster which condenses the 7 residues using its respective 7 modules. The terminal condensation domain (Ct) is involved in cyclization with D-alanine and thereby releasing of unguisins H and I. Finally, the hydrolase ungD' catalyzes the hydrolysis between the D-tryptophan and GABA residues of unguisins H and I to produce the corresponding linear peptides. The chain is Methyltransferase ungE' from Aspergillus campestris (strain IBT 28561).